The sequence spans 340 residues: Ketol-acid reductoisomerase (NADP(+)) (340 aa).

In terms of domain architecture, KARI N-terminal Rossmann spans Val3–Thr182. Residues Tyr26 to Gln29, Arg49, Ser53, and Asp83 to Gln86 contribute to the NADP(+) site. The active site involves His108. Gly134 serves as a coordination point for NADP(+). One can recognise a KARI C-terminal knotted domain in the interval Thr183 to Val328. Residues Asp191, Glu195, Glu227, and Glu231 each coordinate Mg(2+). Ser252 is a substrate binding site.

This sequence belongs to the ketol-acid reductoisomerase family. Requires Mg(2+) as cofactor.

The catalysed reaction is (2R)-2,3-dihydroxy-3-methylbutanoate + NADP(+) = (2S)-2-acetolactate + NADPH + H(+). It catalyses the reaction (2R,3R)-2,3-dihydroxy-3-methylpentanoate + NADP(+) = (S)-2-ethyl-2-hydroxy-3-oxobutanoate + NADPH + H(+). It participates in amino-acid biosynthesis; L-isoleucine biosynthesis; L-isoleucine from 2-oxobutanoate: step 2/4. Its pathway is amino-acid biosynthesis; L-valine biosynthesis; L-valine from pyruvate: step 2/4. In terms of biological role, involved in the biosynthesis of branched-chain amino acids (BCAA). Catalyzes an alkyl-migration followed by a ketol-acid reduction of (S)-2-acetolactate (S2AL) to yield (R)-2,3-dihydroxy-isovalerate. In the isomerase reaction, S2AL is rearranged via a Mg-dependent methyl migration to produce 3-hydroxy-3-methyl-2-ketobutyrate (HMKB). In the reductase reaction, this 2-ketoacid undergoes a metal-dependent reduction by NADPH to yield (R)-2,3-dihydroxy-isovalerate. The polypeptide is Ketol-acid reductoisomerase (NADP(+)) (Streptococcus mutans serotype c (strain ATCC 700610 / UA159)).